An 845-amino-acid polypeptide reads, in one-letter code: Protein translocase subunit SecA 1 (845 aa).

ATP contacts are provided by residues glutamine 91, glycine 109–threonine 113, and aspartate 498. Positions threonine 795–glutamate 845 are disordered. Cysteine 829, cysteine 831, cysteine 840, and histidine 841 together coordinate Zn(2+). Residues lysine 835–glutamate 845 are compositionally biased toward basic residues.

This sequence belongs to the SecA family. In terms of assembly, monomer and homodimer. Part of the essential Sec protein translocation apparatus which comprises SecA, SecYEG and auxiliary proteins SecDF. Other proteins may also be involved. It depends on Zn(2+) as a cofactor.

The protein resides in the cell membrane. It localises to the cytoplasm. The catalysed reaction is ATP + H2O + cellular proteinSide 1 = ADP + phosphate + cellular proteinSide 2.. Functionally, part of the Sec protein translocase complex. Interacts with the SecYEG preprotein conducting channel. Has a central role in coupling the hydrolysis of ATP to the transfer of proteins into and across the cell membrane, serving as an ATP-driven molecular motor driving the stepwise translocation of polypeptide chains across the membrane. This Staphylococcus haemolyticus (strain JCSC1435) protein is Protein translocase subunit SecA 1.